The primary structure comprises 640 residues: Lysophospholipase (640 aa).

A signal peptide spans Met-1–Ala-25. The 552-residue stretch at Asp-38–Asp-589 folds into the PLA2c domain. Residues Asn-84, Asn-126, Asn-163, Asn-173, Asn-218, Asn-280, Asn-310, Asn-317, Asn-348, Asn-391, Asn-492, Asn-516, Asn-544, Asn-568, and Asn-585 are each glycosylated (N-linked (GlcNAc...) asparagine). Over residues Ile-594 to Ser-610 the composition is skewed to low complexity. Residues Ile-594–Ser-616 are disordered.

The protein belongs to the lysophospholipase family. Post-translationally, highly glycosylated.

The protein resides in the secreted. It catalyses the reaction a 1-acyl-sn-glycero-3-phosphocholine + H2O = sn-glycerol 3-phosphocholine + a fatty acid + H(+). Catalyzes the release of fatty acids from lysophospholipids. At acidic pH the enzyme hydrolyzes all phospholipid substrates without metal ion. On the other hand, at alkaline pH the enzyme shows substrate specificity for phosphatidylcholine and lysophosphatidylcholine and requires Ca(2+), Fe(3+), or Al(3+) for the activity. The sequence is that of Lysophospholipase (PLB) from Kluyveromyces lactis (strain ATCC 8585 / CBS 2359 / DSM 70799 / NBRC 1267 / NRRL Y-1140 / WM37) (Yeast).